We begin with the raw amino-acid sequence, 550 residues long: Glucose-6-phosphate isomerase 1 (550 aa).

Catalysis depends on Glu358, which acts as the Proton donor. Active-site residues include His389 and Lys513.

Belongs to the GPI family.

The protein localises to the cytoplasm. The enzyme catalyses alpha-D-glucose 6-phosphate = beta-D-fructose 6-phosphate. Its pathway is carbohydrate biosynthesis; gluconeogenesis. It participates in carbohydrate degradation; glycolysis; D-glyceraldehyde 3-phosphate and glycerone phosphate from D-glucose: step 2/4. Catalyzes the reversible isomerization of glucose-6-phosphate to fructose-6-phosphate. The sequence is that of Glucose-6-phosphate isomerase 1 from Streptomyces coelicolor (strain ATCC BAA-471 / A3(2) / M145).